A 487-amino-acid chain; its full sequence is Bifunctional protein GlmU (487 aa).

The pyrophosphorylase stretch occupies residues 1–240 (MAEVTNCAAI…PEELSGVNDR (240 aa)). Residues 12 to 15 (LAAG), Lys26, Gln83, and 88 to 89 (GT) contribute to the UDP-N-acetyl-alpha-D-glucosamine site. Asp113 provides a ligand contact to Mg(2+). The UDP-N-acetyl-alpha-D-glucosamine site is built by Gly150, Glu165, Asn180, and Asn238. Asn238 is a Mg(2+) binding site. The tract at residues 241 to 261 (VQLAAAGRLLNRRMVEEAMRG) is linker. Positions 262–487 (GTTIVDPDTT…DAKANDQTTN (226 aa)) are N-acetyltransferase. The UDP-N-acetyl-alpha-D-glucosamine site is built by Arg343 and Lys361. His373 (proton acceptor) is an active-site residue. UDP-N-acetyl-alpha-D-glucosamine-binding residues include Tyr376 and Asn387. Acetyl-CoA-binding positions include Ala390, 396–397 (NY), Ser415, and Ala433. A disordered region spans residues 449–487 (SGGKQRNIEGWVQKKRPGTPAAEAAGKAQDAKANDQTTN).

This sequence in the N-terminal section; belongs to the N-acetylglucosamine-1-phosphate uridyltransferase family. The protein in the C-terminal section; belongs to the transferase hexapeptide repeat family. In terms of assembly, homotrimer. Mg(2+) is required as a cofactor.

It is found in the cytoplasm. The enzyme catalyses alpha-D-glucosamine 1-phosphate + acetyl-CoA = N-acetyl-alpha-D-glucosamine 1-phosphate + CoA + H(+). The catalysed reaction is N-acetyl-alpha-D-glucosamine 1-phosphate + UTP + H(+) = UDP-N-acetyl-alpha-D-glucosamine + diphosphate. Its pathway is nucleotide-sugar biosynthesis; UDP-N-acetyl-alpha-D-glucosamine biosynthesis; N-acetyl-alpha-D-glucosamine 1-phosphate from alpha-D-glucosamine 6-phosphate (route II): step 2/2. It participates in nucleotide-sugar biosynthesis; UDP-N-acetyl-alpha-D-glucosamine biosynthesis; UDP-N-acetyl-alpha-D-glucosamine from N-acetyl-alpha-D-glucosamine 1-phosphate: step 1/1. It functions in the pathway bacterial outer membrane biogenesis; LPS lipid A biosynthesis. Functionally, catalyzes the last two sequential reactions in the de novo biosynthetic pathway for UDP-N-acetylglucosamine (UDP-GlcNAc). The C-terminal domain catalyzes the transfer of acetyl group from acetyl coenzyme A to glucosamine-1-phosphate (GlcN-1-P) to produce N-acetylglucosamine-1-phosphate (GlcNAc-1-P), which is converted into UDP-GlcNAc by the transfer of uridine 5-monophosphate (from uridine 5-triphosphate), a reaction catalyzed by the N-terminal domain. This chain is Bifunctional protein GlmU, found in Corynebacterium aurimucosum (strain ATCC 700975 / DSM 44827 / CIP 107346 / CN-1) (Corynebacterium nigricans).